A 206-amino-acid chain; its full sequence is Large ribosomal subunit protein bL25 (206 aa).

Belongs to the bacterial ribosomal protein bL25 family. CTC subfamily. Part of the 50S ribosomal subunit; part of the 5S rRNA/L5/L18/L25 subcomplex. Contacts the 5S rRNA. Binds to the 5S rRNA independently of L5 and L18.

Functionally, this is one of the proteins that binds to the 5S RNA in the ribosome where it forms part of the central protuberance. This chain is Large ribosomal subunit protein bL25, found in Bartonella henselae (strain ATCC 49882 / DSM 28221 / CCUG 30454 / Houston 1) (Rochalimaea henselae).